The sequence spans 362 residues: 3-dehydroquinate synthase (362 aa).

NAD(+) contacts are provided by residues 70-75, 104-108, 128-129, K141, and K150; these read DGESYK, GVVGD, and TT. E183, H246, and H263 together coordinate Zn(2+).

The protein belongs to the sugar phosphate cyclases superfamily. Dehydroquinate synthase family. Co(2+) is required as a cofactor. It depends on Zn(2+) as a cofactor. Requires NAD(+) as cofactor.

It localises to the cytoplasm. It catalyses the reaction 7-phospho-2-dehydro-3-deoxy-D-arabino-heptonate = 3-dehydroquinate + phosphate. It participates in metabolic intermediate biosynthesis; chorismate biosynthesis; chorismate from D-erythrose 4-phosphate and phosphoenolpyruvate: step 2/7. In terms of biological role, catalyzes the conversion of 3-deoxy-D-arabino-heptulosonate 7-phosphate (DAHP) to dehydroquinate (DHQ). This chain is 3-dehydroquinate synthase, found in Saccharophagus degradans (strain 2-40 / ATCC 43961 / DSM 17024).